The chain runs to 550 residues: Invertase (550 aa).

The signal sequence occupies residues 1 to 22 (MIQLSPLLLLPLFSVFNSIADA). Substrate-binding positions include 39-42 (WMND), Q60, and 103-104 (FS). The active site involves D42. Residues N112, N113, N119, and N165 are each glycosylated (N-linked (GlcNAc...) asparagine). 170–171 (RD) contributes to the substrate binding site. An N-linked (GlcNAc...) asparagine glycan is attached at N211. E223 is a substrate binding site. N237 carries N-linked (GlcNAc...) asparagine glycosylation. W313 provides a ligand contact to substrate. N333, N364, N398, and N420 each carry an N-linked (GlcNAc...) asparagine glycan.

Belongs to the glycosyl hydrolase 32 family.

It carries out the reaction Hydrolysis of terminal non-reducing beta-D-fructofuranoside residues in beta-D-fructofuranosides.. The sequence is that of Invertase (INV1) from Wickerhamomyces anomalus (Yeast).